Reading from the N-terminus, the 591-residue chain is Putative F-box protein At1g32140 (591 aa).

The region spanning Thr-2–Arg-49 is the F-box domain. Basic residues predominate over residues Ala-567–Lys-581. Residues Ala-567–Val-591 form a disordered region.

The sequence is that of Putative F-box protein At1g32140 from Arabidopsis thaliana (Mouse-ear cress).